A 497-amino-acid polypeptide reads, in one-letter code: tRNA-2-methylthio-N(6)-dimethylallyladenosine synthase (497 aa).

The region spanning 4-120 is the MTTase N-terminal domain; it reads RSYEVRTFGC…LPVLLERARH (117 aa). Cys13, Cys49, Cys83, Cys157, Cys161, and Cys164 together coordinate [4Fe-4S] cluster. A Radical SAM core domain is found at 143-374; it reads RASHHSAWVS…ALQDEVSWAQ (232 aa). A TRAM domain is found at 376–445; the sequence is RELVGRRVEL…PHHLTADGPL (70 aa).

The protein belongs to the methylthiotransferase family. MiaB subfamily. In terms of assembly, monomer. [4Fe-4S] cluster is required as a cofactor.

The protein localises to the cytoplasm. The enzyme catalyses N(6)-dimethylallyladenosine(37) in tRNA + (sulfur carrier)-SH + AH2 + 2 S-adenosyl-L-methionine = 2-methylsulfanyl-N(6)-dimethylallyladenosine(37) in tRNA + (sulfur carrier)-H + 5'-deoxyadenosine + L-methionine + A + S-adenosyl-L-homocysteine + 2 H(+). Functionally, catalyzes the methylthiolation of N6-(dimethylallyl)adenosine (i(6)A), leading to the formation of 2-methylthio-N6-(dimethylallyl)adenosine (ms(2)i(6)A) at position 37 in tRNAs that read codons beginning with uridine. The protein is tRNA-2-methylthio-N(6)-dimethylallyladenosine synthase of Frankia alni (strain DSM 45986 / CECT 9034 / ACN14a).